The primary structure comprises 100 residues: Testis development-related protein 1 (100 aa).

Positions 73-100 are disordered; the sequence is GLGSLGGQDSSGSLVQRASCELESPYEL.

As to expression, expressed in the testis but not in any other non-reproductive tissues (at protein level). Mainly located in spermatogenic cells in seminiferous tubules of adult testis.

The protein resides in the cytoplasm. In Homo sapiens (Human), this protein is Testis development-related protein 1 (TDRG1).